Reading from the N-terminus, the 230-residue chain is Cutinase 1 (230 aa).

The first 16 residues, 1 to 16 (MKFFALTTLLAATASA), serve as a signal peptide directing secretion. The propeptide occupies 17-31 (LPTSNPAQELEARQL). Gly32 carries the post-translational modification N-D-glucuronoyl glycine. Cys47 and Cys125 are joined by a disulfide. Residue Ser136 is the Nucleophile of the active site. A disulfide bridge connects residues Cys187 and Cys194. Asp191 is an active-site residue. His204 serves as the catalytic Proton donor/acceptor.

This sequence belongs to the cutinase family. Post-translationally, the 2 disulfide bonds play a critical role in holding the catalytic residues in juxta-position; reduction of the disulfide bridges results in the complete inactivation of the enzyme. O-glycosylated; contains one mole each of mannose, arabinose, N-acetylglucosamine, and glucuronic acid.

Its subcellular location is the secreted. It catalyses the reaction cutin + H2O = cutin monomers.. Inhibited by n-undecyl phosphonate (C11Y4). Inhibited by paraoxon. Catalyzes the hydrolysis of complex carboxylic polyesters found in the cell wall of plants. Degrades cutin, a macromolecule that forms the structure of the plant cuticle. Allows pathogenic fungi to penetrate through the cuticular barrier into the host plant during the initial stage of fungal infection. The polypeptide is Cutinase 1 (CUT1) (Fusarium vanettenii (Neocosmospora pisi)).